Reading from the N-terminus, the 423-residue chain is Osteomodulin (423 aa).

Positions 1–20 (MGFLSPIYVLFFCFGVRVYC) are cleaved as a signal peptide. A sulfotyrosine mark is found at tyrosine 22, tyrosine 25, tyrosine 31, tyrosine 39, tyrosine 51, and tyrosine 77. In terms of domain architecture, LRRNT spans 53–91 (VPFYNNILGCAKECFCPTNFPTSMYCDNRKLKTIPIIPM). 11 LRR repeats span residues 92–113 (HIQQLNLQFNDIEAVTANSFIN), 116–129 (HLKEINLSHNKIKS), 142–164 (NLQQLHLEHNNLEEFPFPLPKSL), 165–184 (ERLLLGYNEISILPTNAMDG), 187–207 (NVTMLDLCYNHLSDSMLKEKT), 213–233 (KLMQLNLCNNRLESMPLGLPS), 234–255 (SLMYLSLENNSISSIPDNYFDK), 258–279 (KLHALRISHNKLEDIPYDIFNL), 281–294 (NLIELNVGHNKLKQ), 301–322 (NLEHLYLQNNEIESINVTMICP), and 331–353 (HLTYLRVDQNKLKEPISSYIFFC). N-linked (GlcNAc...) asparagine glycans are attached at residues asparagine 113 and asparagine 121. A glycan (N-linked (GlcNAc...) asparagine) is linked at asparagine 187. Asparagine 242 and asparagine 278 each carry an N-linked (GlcNAc...) asparagine glycan. Asparagine 316 is a glycosylation site (N-linked (GlcNAc...) asparagine). Residues cysteine 321 and cysteine 353 are joined by a disulfide bond. Residues 381–406 (RSYQEEEEEDDHDSQDNTLEGQEVSD) are disordered. Sulfotyrosine is present on residues tyrosine 413 and tyrosine 414.

Belongs to the small leucine-rich proteoglycan (SLRP) family. SLRP class II subfamily. In terms of assembly, binds the alpha(V)beta(3)-integrin. In terms of processing, glycosylated; contains keratan sulfate. In terms of tissue distribution, bone specific.

It localises to the secreted. The protein resides in the extracellular space. It is found in the extracellular matrix. Its function is as follows. May be implicated in biomineralization processes. Has a function in binding of osteoblasts via the alpha(V)beta(3)-integrin. This is Osteomodulin (Omd) from Mus musculus (Mouse).